The sequence spans 155 residues: Ribosomal RNA large subunit methyltransferase H (155 aa).

Residues Leu-73, Gly-104, and 123–128 (LSPLTL) contribute to the S-adenosyl-L-methionine site.

This sequence belongs to the RNA methyltransferase RlmH family. In terms of assembly, homodimer.

The protein resides in the cytoplasm. The enzyme catalyses pseudouridine(1915) in 23S rRNA + S-adenosyl-L-methionine = N(3)-methylpseudouridine(1915) in 23S rRNA + S-adenosyl-L-homocysteine + H(+). Its function is as follows. Specifically methylates the pseudouridine at position 1915 (m3Psi1915) in 23S rRNA. The chain is Ribosomal RNA large subunit methyltransferase H from Pseudomonas aeruginosa (strain UCBPP-PA14).